The sequence spans 435 residues: MDRDYISELPDSLLTQILLELRTKDSVKTSVLSKRWRNLWLNVPGLELFTLQFTYPDREEIFVRFMDRFMEFKCRSRLKKFMITYVDCKGYRDRLMELIGTLVDHGLQHLYVFMHTFDRVDFKRQNIYKSKTLVSLKLHNVELKNSDFVVSLPCLKILKLENICHGEDGPLVVEKLISGCSVLEDLELIRPFDIRTHKVLLLLRVSSQTLKSFTLHFAIYKDRTDFSVEIDAPRLKYMTVEQSQSDSIVVKNLSSLFSIDIGTKFNPLRHEDLRMRNVFYDFLTGISSVKHMIICLWSLQRFSPYSKPGLIPKFQNLYHLKAQMWSSSTHLLEAFLESCPNLKNLILEYNVELDREQVDFTNVPQCLISTLEYVEIKEPNEKSTIKLVNYFLENSAVLKKLTLRFSYSSSIYLKSYKKLLTSTKLSPTCQVIFGC.

An F-box domain is found at 3–49; that stretch reads RDYISELPDSLLTQILLELRTKDSVKTSVLSKRWRNLWLNVPGLELF. LRR repeat units follow at residues 88-114, 138-162, 165-190, 191-217, 250-275, and 324-349; these read CKGYRDRLMELIGTLVDHGLQHLYVFM, LHNVELKNSDFVVSLPCLKILKLEN, HGEDGPLVVEKLISGCSVLEDLELIR, PFDIRTHKVLLLLRVSSQTLKSFTLHF, VKNLSSLFSIDIGTKFNPLRHEDLRM, and MWSSSTHLLEAFLESCPNLKNLILEY. In terms of domain architecture, FBD spans 355-405; the sequence is REQVDFTNVPQCLISTLEYVEIKEPNEKSTIKLVNYFLENSAVLKKLTLRF.

In Arabidopsis thaliana (Mouse-ear cress), this protein is F-box/FBD/LRR-repeat protein At5g44980.